We begin with the raw amino-acid sequence, 1342 residues long: DNA-directed RNA polymerase subunit beta (1342 aa).

Belongs to the RNA polymerase beta chain family. In terms of assembly, the RNAP catalytic core consists of 2 alpha, 1 beta, 1 beta' and 1 omega subunit. When a sigma factor is associated with the core the holoenzyme is formed, which can initiate transcription.

It carries out the reaction RNA(n) + a ribonucleoside 5'-triphosphate = RNA(n+1) + diphosphate. Its function is as follows. DNA-dependent RNA polymerase catalyzes the transcription of DNA into RNA using the four ribonucleoside triphosphates as substrates. The chain is DNA-directed RNA polymerase subunit beta from Mannheimia succiniciproducens (strain KCTC 0769BP / MBEL55E).